A 165-amino-acid chain; its full sequence is Shikimate kinase (165 aa).

12-17 (GCGKST) lines the ATP pocket. Ser16 contributes to the Mg(2+) binding site. Substrate-binding residues include Asp34, Arg57, and Gly79. Arg116 serves as a coordination point for ATP. Arg133 provides a ligand contact to substrate.

This sequence belongs to the shikimate kinase family. Monomer. The cofactor is Mg(2+).

Its subcellular location is the cytoplasm. It carries out the reaction shikimate + ATP = 3-phosphoshikimate + ADP + H(+). The protein operates within metabolic intermediate biosynthesis; chorismate biosynthesis; chorismate from D-erythrose 4-phosphate and phosphoenolpyruvate: step 5/7. Its function is as follows. Catalyzes the specific phosphorylation of the 3-hydroxyl group of shikimic acid using ATP as a cosubstrate. The chain is Shikimate kinase from Clostridium botulinum (strain Alaska E43 / Type E3).